We begin with the raw amino-acid sequence, 436 residues long: MALPTVAIVGRPNVGKSALFNRIAGERISIVEDVEGVTRDRIYTKAEWLNRQFSIIDTGGIDDVDAPFMEQIKHQADIAMTEADVIVFVVSAKEGITDADEYVAKILYRTHKPVILAVNKVDNPEMRSAIYDFYALGLGDPYPVSSAHGIGTGDVLDAIVDNLPTEAQEESSDIIKFSLIGRPNVGKSSLINAILGEDRVIASPVAGTTRDAIDTTFTDEEGQEFTMIDTAGMRKSGKVYENTEKYSVMRAMRAIDRSDIVLMVLNAEEGIREYDKRIAGFAHEAGKGIVVVVNKWDAIKKDNRTVAQWEADIRDNFQYIPYAPIVFVSAVTKQRLHKLPDVIKQVSQSQNTRIPSAVLNDVVMDAVAINPTPTDKGKRLKIFYATQVSVKPPTFVIFVNEEELMHFSYLRFLENQIRQAFVFEGTPIRLIARKRK.

EngA-type G domains follow at residues 4–167 (PTVA…PTEA) and 175–351 (IKFS…QSQN). Residues 10–17 (GRPNVGKS), 57–61 (DTGGI), 119–122 (NKVD), 181–188 (GRPNVGKS), 229–233 (DTAGM), and 294–297 (NKWD) each bind GTP. A KH-like domain is found at 352–436 (TRIPSAVLND…PIRLIARKRK (85 aa)).

It belongs to the TRAFAC class TrmE-Era-EngA-EngB-Septin-like GTPase superfamily. EngA (Der) GTPase family. In terms of assembly, associates with the 50S ribosomal subunit.

Its function is as follows. GTPase that plays an essential role in the late steps of ribosome biogenesis. This Streptococcus mutans serotype c (strain ATCC 700610 / UA159) protein is GTPase Der.